The chain runs to 379 residues: Flagellin A (379 aa).

Coiled coils occupy residues 104–129 (NSAS…IAET) and 314–341 (QNRL…IKDT).

This sequence belongs to the bacterial flagellin family. In terms of assembly, heteromer of multiple flagellin subunits including FlaA, FlaB, FlaC, FlaD and FlaE.

The protein resides in the secreted. It localises to the bacterial flagellum. Flagellin is the subunit protein which polymerizes to form the filaments of bacterial flagella. FlaA is required to form a core or scaffold into which the other flagellins are inserted to provide structural integrity. Essential for flagellar synthesis and motility; important for full virulence. The protein is Flagellin A (flaA) of Vibrio cholerae serotype O1 (strain ATCC 39541 / Classical Ogawa 395 / O395).